A 178-amino-acid chain; its full sequence is ATP synthase subunit delta (178 aa).

Belongs to the ATPase delta chain family. As to quaternary structure, F-type ATPases have 2 components, F(1) - the catalytic core - and F(0) - the membrane proton channel. F(1) has five subunits: alpha(3), beta(3), gamma(1), delta(1), epsilon(1). F(0) has three main subunits: a(1), b(2) and c(10-14). The alpha and beta chains form an alternating ring which encloses part of the gamma chain. F(1) is attached to F(0) by a central stalk formed by the gamma and epsilon chains, while a peripheral stalk is formed by the delta and b chains.

Its subcellular location is the cell inner membrane. Functionally, f(1)F(0) ATP synthase produces ATP from ADP in the presence of a proton or sodium gradient. F-type ATPases consist of two structural domains, F(1) containing the extramembraneous catalytic core and F(0) containing the membrane proton channel, linked together by a central stalk and a peripheral stalk. During catalysis, ATP synthesis in the catalytic domain of F(1) is coupled via a rotary mechanism of the central stalk subunits to proton translocation. Its function is as follows. This protein is part of the stalk that links CF(0) to CF(1). It either transmits conformational changes from CF(0) to CF(1) or is implicated in proton conduction. The chain is ATP synthase subunit delta from Methylococcus capsulatus (strain ATCC 33009 / NCIMB 11132 / Bath).